A 90-amino-acid chain; its full sequence is Putative membrane protein insertion efficiency factor (90 aa).

It belongs to the UPF0161 family.

Its subcellular location is the cell membrane. In terms of biological role, could be involved in insertion of integral membrane proteins into the membrane. The chain is Putative membrane protein insertion efficiency factor from Lactococcus lactis subsp. cremoris (strain MG1363).